The primary structure comprises 841 residues: MGKKGKVGKSRRDKFYHLAKETGYRSRSAFKLIQLNRRFQFLQKARALLDLCAAPGGWLQVAAKFMPVSSLIVGVDLVPIKPLPNVVTLQEDITTERCRQALRKELKTWKVDVVLNDGAPNVGASWVHDAYSQAHLTLMALRLACDFLARGGSFITKVFRSRDYQPLLWIFQQLFRRVQATKPQASRHESAEIFVVCQGFLAPDKVDSKFFDPKFAFKEVEVQAKTVTELVTKKKPKAEGYAEGDLTLYHRTSVTDFLRAANPVDFLSKASEIMVDDEELAQHPATTEDIRVCCQDIRVLGRKELRSLLNWRTKLRRYVAKKLKEQAKALDISLSSGEEDEGNEEDSTAGTTEQPSKEEEEEEQLNQTLAEMKAQEVAELKRKKKKLLREQRKQRERVELKMDLPGVSIADEGETGMFSLRTIRGQQLLEEVTQGDMSAADTFLSDLPRDDIYVSDVEDDGDDTSLDSDLDPEELAGVRGHQGLRDQKRVRLTEVQDDKEEEEEEENPLLVPLEEKAVLQEEQANLWFSKGSFAGIEDDADEALEISQAQLLFESQRKGRQQQLPQTLPSCLKTEIMSPLYQDEAPKGTEASSGTEAATGLKGEEKDGISDSDSSSSSEEEESWEPVRGKKRSRGPKSDDDGFEIVPIEDPAKHRILDPEGLALGAVIASSKKAKRDLIDNSFNRYTFNEDEGELPEWFVQEEKQHRIRQLPIGKKEMEHYRKRWREINARPIKKVAEAKARKKRRMLKRLEQTRKKAEAVVNTVDISEREKVAQLRSLYKKAGLGKEKRHVTYVVAKKGVGRKVRRPAGVRGHFKVVDSRMKKDQRAQQRKEQKKKHKRK.

The S-adenosyl-L-methionine site is built by G56, W58, D76, D92, and D117. K157 (proton acceptor) is an active-site residue. Residues 332 to 366 (ISLSSGEEDEGNEEDSTAGTTEQPSKEEEEEEQLN) are disordered. Residues S333, S335, S336, S347, and S356 each carry the phosphoserine modification. The span at 337-347 (GEEDEGNEEDS) shows a compositional bias: acidic residues. Positions 356–404 (SKEEEEEEQLNQTLAEMKAQEVAELKRKKKKLLREQRKQRERVELKMDL) form a coiled coil. K357 is covalently cross-linked (Glycyl lysine isopeptide (Lys-Gly) (interchain with G-Cter in SUMO2)). Residue R389 is modified to Citrulline. A disordered region spans residues 454 to 482 (VSDVEDDGDDTSLDSDLDPEELAGVRGHQ). Acidic residues predominate over residues 456 to 474 (DVEDDGDDTSLDSDLDPEE). Residue S547 is modified to Phosphoserine. Phosphothreonine is present on T567. K573 participates in a covalent cross-link: Glycyl lysine isopeptide (Lys-Gly) (interchain with G-Cter in SUMO2). S578 is subject to Phosphoserine. The disordered stretch occupies residues 579-654 (PLYQDEAPKG…IVPIEDPAKH (76 aa)). K637 is covalently cross-linked (Glycyl lysine isopeptide (Lys-Gly) (interchain with G-Cter in SUMO2)). S638 is modified (phosphoserine). K653 is covalently cross-linked (Glycyl lysine isopeptide (Lys-Gly) (interchain with G-Cter in SUMO2)). At S670 the chain carries Phosphoserine. K672 participates in a covalent cross-link: Glycyl lysine isopeptide (Lys-Gly) (interchain with G-Cter in SUMO2). S682 bears the Phosphoserine mark. Residue K704 forms a Glycyl lysine isopeptide (Lys-Gly) (interchain with G-Cter in SUMO2) linkage. A coiled-coil region spans residues 733–771 (IKKVAEAKARKKRRMLKRLEQTRKKAEAVVNTVDISERE). At R777 the chain carries Citrulline. Basic residues predominate over residues 805–815 (VRRPAGVRGHF). Residues 805 to 841 (VRRPAGVRGHFKVVDSRMKKDQRAQQRKEQKKKHKRK) are disordered. Residues 816–832 (KVVDSRMKKDQRAQQRK) show a composition bias toward basic and acidic residues.

The protein belongs to the class I-like SAM-binding methyltransferase superfamily. RNA methyltransferase RlmE family. SPB1 subfamily. In terms of assembly, interacts with NIP7. Citrullinated by PADI4.

It is found in the nucleus. The protein resides in the nucleolus. The catalysed reaction is a ribonucleotide in rRNA + S-adenosyl-L-methionine = a 2'-O-methylribonucleotide in rRNA + S-adenosyl-L-homocysteine + H(+). In terms of biological role, RNA 2'-O-methyltransferase involved in the processing of the 34S pre-rRNA to 18S rRNA and in 40S ribosomal subunit formation. The polypeptide is pre-rRNA 2'-O-ribose RNA methyltransferase FTSJ3 (Pongo abelii (Sumatran orangutan)).